We begin with the raw amino-acid sequence, 356 residues long: Inositol phosphoceramide mannosyltransferase 3 (356 aa).

A helical membrane pass occupies residues 4–24 (ILFYFFFFLTLILSATVYLFG). N52 and N146 each carry an N-linked (GlcNAc...) asparagine glycan. 2 helical membrane passes run 197–217 (FPYLTVMYSTGPLFLSIIWSA) and 269–289 (WAIFTFLGFLTFFIVVYFIFG). S307, S353, and S355 each carry phosphoserine.

The protein belongs to the glycosyltransferase 32 family.

It localises to the endoplasmic reticulum membrane. Its subcellular location is the golgi apparatus. The protein resides in the cis-Golgi network membrane. It is found in the trans-Golgi network membrane. Functionally, with imt1 and imt2, is required for the synthesis of mannosylinositol phosphoceramide (MIPC). Catalyzes the addition of mannosyl to inositol phosphoceramide (IPC). MIPC is essential for cell morphology, cell-surface distribution of ergosterol, localization for plasma-membrane transporters, and lipid-raft-mediated endocytosis of plasma membrane proteins to the vacuole. The protein is Inositol phosphoceramide mannosyltransferase 3 of Schizosaccharomyces pombe (strain 972 / ATCC 24843) (Fission yeast).